Reading from the N-terminus, the 432-residue chain is 3-phosphoshikimate 1-carboxyvinyltransferase (432 aa).

Residues Lys-21, Ser-22, and Arg-26 each contribute to the 3-phosphoshikimate site. A phosphoenolpyruvate-binding site is contributed by Lys-21. The phosphoenolpyruvate site is built by Gly-94 and Arg-122. 4 residues coordinate 3-phosphoshikimate: Ser-168, Gln-170, Asp-317, and Lys-344. Gln-170 provides a ligand contact to phosphoenolpyruvate. The active-site Proton acceptor is the Asp-317. Phosphoenolpyruvate is bound by residues Arg-348 and Arg-391.

The protein belongs to the EPSP synthase family. As to quaternary structure, monomer.

It is found in the cytoplasm. It catalyses the reaction 3-phosphoshikimate + phosphoenolpyruvate = 5-O-(1-carboxyvinyl)-3-phosphoshikimate + phosphate. Its pathway is metabolic intermediate biosynthesis; chorismate biosynthesis; chorismate from D-erythrose 4-phosphate and phosphoenolpyruvate: step 6/7. In terms of biological role, catalyzes the transfer of the enolpyruvyl moiety of phosphoenolpyruvate (PEP) to the 5-hydroxyl of shikimate-3-phosphate (S3P) to produce enolpyruvyl shikimate-3-phosphate and inorganic phosphate. The polypeptide is 3-phosphoshikimate 1-carboxyvinyltransferase (Petrotoga mobilis (strain DSM 10674 / SJ95)).